Here is a 276-residue protein sequence, read N- to C-terminus: NAD-capped RNA hydrolase NudC (276 aa).

Arginine 82 contributes to the substrate binding site. Cysteine 112 and cysteine 115 together coordinate Zn(2+). Substrate is bound at residue glutamate 125. 2 residues coordinate Zn(2+): cysteine 130 and cysteine 133. Tyrosine 138 is a substrate binding site. In terms of domain architecture, Nudix hydrolase spans 139–262 (PRISPSMIVL…SIARYLIDLY (124 aa)). A divalent metal cation contacts are provided by alanine 172, glutamate 188, and glutamate 192. Residues 173–194 (GFAEPGESAEDCLVREVREEVA) carry the Nudix box motif. 206–213 (QCWPFPHS) contacts substrate. A divalent metal cation is bound at residue glutamate 233. Alanine 255 is a binding site for substrate.

Belongs to the Nudix hydrolase family. NudC subfamily. As to quaternary structure, homodimer. The cofactor is Mg(2+). It depends on Mn(2+) as a cofactor. Zn(2+) serves as cofactor.

It catalyses the reaction a 5'-end NAD(+)-phospho-ribonucleoside in mRNA + H2O = a 5'-end phospho-adenosine-phospho-ribonucleoside in mRNA + beta-nicotinamide D-ribonucleotide + 2 H(+). It carries out the reaction NAD(+) + H2O = beta-nicotinamide D-ribonucleotide + AMP + 2 H(+). The catalysed reaction is NADH + H2O = reduced beta-nicotinamide D-ribonucleotide + AMP + 2 H(+). Functionally, mRNA decapping enzyme that specifically removes the nicotinamide adenine dinucleotide (NAD) cap from a subset of mRNAs by hydrolyzing the diphosphate linkage to produce nicotinamide mononucleotide (NMN) and 5' monophosphate mRNA. The NAD-cap is present at the 5'-end of some mRNAs and stabilizes RNA against 5'-processing. Has preference for mRNAs with a 5'-end purine. Catalyzes the hydrolysis of a broad range of dinucleotide pyrophosphates. The chain is NAD-capped RNA hydrolase NudC from Pseudomonas putida (strain ATCC 700007 / DSM 6899 / JCM 31910 / BCRC 17059 / LMG 24140 / F1).